The primary structure comprises 344 residues: AP2/ERF and B3 domain-containing transcription factor RAV1 (344 aa).

A compositionally biased stretch (low complexity) spans 1–15 (MESSSVDESTTSTGS). The interval 1 to 22 (MESSSVDESTTSTGSICETPAI) is disordered. The AP2/ERF DNA-binding region spans 61-116 (KYKGVVPQPNGRWGAQIYEKHQRVWLGTFNEEDEAARAYDVAVHRFRRRDAVTNFK). Positions 148-169 (ELEQSKRRRNGNGNMTRTLLTS) are disordered. Residues 188–292 (FEKAVTPSDV…QLYIGWKSRS (105 aa)) constitute a DNA-binding region (TF-B3).

This sequence belongs to the AP2/ERF transcription factor family. RAV subfamily. Monomer. In terms of tissue distribution, expressed in all tissues examined: Roots, rosette leaves, cauline leaves, inflorescence stems, flowers and siliques. Highest expression in roots and rosette leaves. Very low expression in flowers.

It localises to the nucleus. Its function is as follows. Binds specifically to bipartite recognition sequences composed of two unrelated motifs, 5'-CAACA-3' and 5'-CACCTG-3'. May function as negative regulator of plant growth and development. This is AP2/ERF and B3 domain-containing transcription factor RAV1 (RAV1) from Arabidopsis thaliana (Mouse-ear cress).